The following is a 309-amino-acid chain: Ribonuclease Z (309 aa).

Zn(2+) contacts are provided by His-63, His-65, Asp-67, His-68, His-141, Asp-212, and His-270. Asp-67 functions as the Proton acceptor in the catalytic mechanism.

It belongs to the RNase Z family. Homodimer. The cofactor is Zn(2+).

The enzyme catalyses Endonucleolytic cleavage of RNA, removing extra 3' nucleotides from tRNA precursor, generating 3' termini of tRNAs. A 3'-hydroxy group is left at the tRNA terminus and a 5'-phosphoryl group is left at the trailer molecule.. In terms of biological role, zinc phosphodiesterase, which displays some tRNA 3'-processing endonuclease activity. Probably involved in tRNA maturation, by removing a 3'-trailer from precursor tRNA. This Lactobacillus delbrueckii subsp. bulgaricus (strain ATCC 11842 / DSM 20081 / BCRC 10696 / JCM 1002 / NBRC 13953 / NCIMB 11778 / NCTC 12712 / WDCM 00102 / Lb 14) protein is Ribonuclease Z.